A 342-amino-acid chain; its full sequence is 4-hydroxy-3-methylbut-2-enyl diphosphate reductase (342 aa).

Residue Cys-47 participates in [4Fe-4S] cluster binding. Positions 78 and 111 each coordinate (2E)-4-hydroxy-3-methylbut-2-enyl diphosphate. Residues His-78 and His-111 each contribute to the dimethylallyl diphosphate site. Positions 78 and 111 each coordinate isopentenyl diphosphate. Cys-133 lines the [4Fe-4S] cluster pocket. His-161 provides a ligand contact to (2E)-4-hydroxy-3-methylbut-2-enyl diphosphate. His-161 contacts dimethylallyl diphosphate. Residue His-161 coordinates isopentenyl diphosphate. The Proton donor role is filled by Glu-163. Position 201 (Thr-201) interacts with (2E)-4-hydroxy-3-methylbut-2-enyl diphosphate. Cys-231 contributes to the [4Fe-4S] cluster binding site. Residues Ser-259, Ser-260, Asn-261, and Ser-303 each contribute to the (2E)-4-hydroxy-3-methylbut-2-enyl diphosphate site. Dimethylallyl diphosphate-binding residues include Ser-259, Ser-260, Asn-261, and Ser-303. Positions 259, 260, 261, and 303 each coordinate isopentenyl diphosphate.

This sequence belongs to the IspH family. Requires [4Fe-4S] cluster as cofactor.

The catalysed reaction is isopentenyl diphosphate + 2 oxidized [2Fe-2S]-[ferredoxin] + H2O = (2E)-4-hydroxy-3-methylbut-2-enyl diphosphate + 2 reduced [2Fe-2S]-[ferredoxin] + 2 H(+). It catalyses the reaction dimethylallyl diphosphate + 2 oxidized [2Fe-2S]-[ferredoxin] + H2O = (2E)-4-hydroxy-3-methylbut-2-enyl diphosphate + 2 reduced [2Fe-2S]-[ferredoxin] + 2 H(+). The protein operates within isoprenoid biosynthesis; dimethylallyl diphosphate biosynthesis; dimethylallyl diphosphate from (2E)-4-hydroxy-3-methylbutenyl diphosphate: step 1/1. It functions in the pathway isoprenoid biosynthesis; isopentenyl diphosphate biosynthesis via DXP pathway; isopentenyl diphosphate from 1-deoxy-D-xylulose 5-phosphate: step 6/6. In terms of biological role, catalyzes the conversion of 1-hydroxy-2-methyl-2-(E)-butenyl 4-diphosphate (HMBPP) into a mixture of isopentenyl diphosphate (IPP) and dimethylallyl diphosphate (DMAPP). Acts in the terminal step of the DOXP/MEP pathway for isoprenoid precursor biosynthesis. The sequence is that of 4-hydroxy-3-methylbut-2-enyl diphosphate reductase from Anaplasma marginale (strain Florida).